A 171-amino-acid polypeptide reads, in one-letter code: Ribosome maturation factor RimM (171 aa).

The PRC barrel domain maps to 96–168; that stretch reads EDGFYDHELE…TATITPPEGL (73 aa).

This sequence belongs to the RimM family. Binds ribosomal protein uS19.

The protein resides in the cytoplasm. An accessory protein needed during the final step in the assembly of 30S ribosomal subunit, possibly for assembly of the head region. Essential for efficient processing of 16S rRNA. May be needed both before and after RbfA during the maturation of 16S rRNA. It has affinity for free ribosomal 30S subunits but not for 70S ribosomes. This chain is Ribosome maturation factor RimM, found in Corynebacterium glutamicum (strain ATCC 13032 / DSM 20300 / JCM 1318 / BCRC 11384 / CCUG 27702 / LMG 3730 / NBRC 12168 / NCIMB 10025 / NRRL B-2784 / 534).